Reading from the N-terminus, the 503-residue chain is Mitochondrial antiviral-signaling protein (503 aa).

The Cytoplasmic portion of the chain corresponds to 1–478; sequence MTFAEDKTYK…HCASSMPWAK (478 aa). Glycyl lysine isopeptide (Lys-Gly) (interchain with G-Cter in ubiquitin) cross-links involve residues Lys7 and Lys10. In terms of domain architecture, CARD spans 10-77; it reads KYIRDNHSKF…WVEVFIRALQ (68 aa). Positions 10–77 are required for interaction with NLRX1; it reads KYIRDNHSKF…WVEVFIRALQ (68 aa). Cys79 carries the S-palmitoyl cysteine lipid modification. Residues 119-202 form a disordered region; that stretch reads GPSAFAPGHN…HQEQEPELGG (84 aa). Positions 143 to 147 are interaction with TRAF2; that stretch reads PVQDT. The span at 145–166 shows a compositional bias: polar residues; it reads QDTQPPESPVENSEQLLQTNSG. 5 positions are modified to phosphoserine: Ser152, Ser157, Ser172, Ser186, and Ser220. The tract at residues 153–158 is interaction with TRAF6 1; sequence PVENSE. The segment covering 178-189 has biased composition (polar residues); it reads PSPNQQALSPQP. Position 234 is an asymmetric dimethylarginine (Arg234). A phosphoserine mark is found at Ser251 and Ser256. Residue Lys302 forms a Glycyl lysine isopeptide (Lys-Gly) (interchain with G-Cter in ubiquitin) linkage. Residues 337 to 503 form an interaction with DHX33 region; it reads PSRVPASVAK…MLYRSRRLAQ (167 aa). The tract at residues 346-398 is disordered; sequence KAPANTIPPERNSKQAKETPEGPATKVTTGGNQTGPNSSIRSLHSGPEMSKPG. Basic and acidic residues predominate over residues 356–365; it reads RNSKQAKETP. Over residues 371–387 the composition is skewed to polar residues; sequence KVTTGGNQTGPNSSIRS. Ser384 bears the Phosphoserine mark. A pLxIS motif motif is present at residues 415 to 418; the sequence is LAIS. Ser418 carries the phosphoserine; by TBK1 modification. Residues 431–436 are interaction with TRAF6 2; that stretch reads PEENEY. A disordered region spans residues 446–466; the sequence is SPSADLLGSPEPLATQQPQEE. A helical transmembrane segment spans residues 479 to 496; it reads WLGATSALLAVFLAVMLY. Residues 497 to 503 are Mitochondrial intermembrane-facing; the sequence is RSRRLAQ.

As to quaternary structure, self-associates and polymerizes (via CARD domains) to form 400 nM long three-stranded helical filaments on mitochondria, filament nucleation requires interaction with RIGI whose CARD domains act as a template for filament assembly. Interacts with RIGI, IFIH1/MDA5, TRAF2, TRAF6 and C1QBP. May interact with FADD, RIPK1, IKBKE, CHUK and IKBKB. Interacts (when phosphorylated) with IRF3; following activation and phosphorylation on the pLxIS motif by TBK1, recruits IRF3. Interacts with NLRX1. Interaction with NLRX1 requires the CARD domain. Interacts with PSMA7. Interacts with TRAFD1. Interacts (via C-terminus) with PCBP2 in a complex containing MAVS/IPS1, PCBP2 and ITCH. Interacts with CYLD. Interacts with SRC. Interacts with DHX58/LGP2 and IKBKE. Interacts with STING1. Interacts with IFIT3 (via N-terminus). Interacts with TBK1 only in the presence of IFIT3. Interacts with TTLL12; the interaction prevents MAVS binding to TBK1 and IKBKE. Interacts with MUL1. Interacts with ANKRD17. Interacts with NDFIP1. Interacts with SMURF1; the interaction is mediated by NDFIP1 and leads to MAVS ubiquitination and degradation. Interacts (via C-terminus) with GPATCH3; the interaction is markedly increased upon viral infection. Directly interacts (via CARD domain) with ATG5 and ATG12, either as ATG5 and ATG12 monomers or as ATG12-ATG5 conjugates. Interacts with DHX33 (via the helicase C-terminal domain). Interacts with DDX3X (via C-terminus); this interaction may occur rapidly, but transiently after viral infection. The interaction with DDX3X potentiates MAVS-mediated IFNB induction. Conversely inhibition of this interaction prevents MAVS-mediated IFNB induction. Transiently interacts with TRAF3 early during viral infection. Interacts with CLPB. Interacts with TRAF3IP3. Interacts with TOMM70; the interaction is enhanced by virus infection. Interacts with ZNFX1. Interacts with DHX15. Interacts with N4BP3; this interaction promotes the polyubiquitination of MAVS. Interacts with TAX1BP1; this interaction induces MAVS polyubiquitination. Interacts with NLRP3; promoting NLRP3 recruitment to mitochondria and activation of the NLRP3 inflammasome. Interacts with ECSIT; this interaction bridges RIGI to the MAVS complex at the mitochondrion. Interacts with UBL7; this interaction promotes MAVS 'Lys-27'-linked ubiquitination leading to type I interferon production. Interacts (via transmembrane domain) with SMIM30/MAVI1 (via transmembrane domain); the interaction disrupts MAVS interaction with RIGI and inhibits MAVS aggregation, resulting in the repression of type I interferon signaling and innate immune responses. Following activation, phosphorylated by TBK1 at Ser-418 in the pLxIS motif. The phosphorylated pLxIS motif constitutes an IRF3-binding motif, leading to recruitment of the transcription factor IRF3 to induce type-I interferons and other cytokines. In terms of processing, ubiquitinated. Undergoes 'Lys-48'-linked polyubiquitination catalyzed by ITCH; ITCH-dependent polyubiquitination is mediated by the interaction with PCBP2 and leads to MAVS/IPS1 proteasomal degradation. Ubiquitinated by RNF125, leading to its degradation by the proteasome. Undergoes 'Lys-48'-linked ubiquitination catalyzed by SMURF1. Undergoes 'Lys-48'-linked ubiquitination catalyzed by MARCHF5 at Lys-7, leading to proteasomal degradation. Ubiquitinated via 'Lys-63'-linked ubiquitination at Lys-10 by TRIM31, promoting MAVS polymerization and formation of three-stranded helical filaments on mitochondria. Undergoes 'Lys-63'-linked ubiquitination leading to enhanced interaction between MAVS and TRAF2. Undergoes 'Lys-27'-linked ubiquitination by UBE2N and TRIM21 leading to enhanced interaction between MAVS and TBK1. Deubiquitinated by USP10 leading to attenuation of RIGI-mediated MAVS aggregation and production of type I interferon. Undergoes 'Lys-48'-linked polyubiquitination catalyzed by RNF115 leading to its degradation. Post-translationally, proteolytically cleaved by apoptotic caspases during apoptosis, leading to its inactivation. Cleavage by CASP3 during virus-induced apoptosis inactivates it, preventing cytokine overproduction. Palmitoylated by ZHDDC4. Palmitoylation promotes MAVS stabilization and activation by inhibiting 'Lys-48'- but facilitating 'Lys-63'-linked ubiquitination.

It localises to the mitochondrion outer membrane. The protein localises to the mitochondrion. It is found in the peroxisome. Functionally, adapter required for innate immune defense against viruses. Acts downstream of DHX33, RIGI and IFIH1/MDA5, which detect intracellular dsRNA produced during viral replication, to coordinate pathways leading to the activation of NF-kappa-B, IRF3 and IRF7, and to the subsequent induction of antiviral cytokines such as IFN-beta and RANTES (CCL5). Peroxisomal and mitochondrial MAVS act sequentially to create an antiviral cellular state. Upon viral infection, peroxisomal MAVS induces the rapid interferon-independent expression of defense factors that provide short-term protection, whereas mitochondrial MAVS activates an interferon-dependent signaling pathway with delayed kinetics, which amplifies and stabilizes the antiviral response. May activate the same pathways following detection of extracellular dsRNA by TLR3. May protect cells from apoptosis. Involved in NLRP3 inflammasome activation by mediating NLRP3 recruitment to mitochondria. The chain is Mitochondrial antiviral-signaling protein from Mus musculus (Mouse).